The chain runs to 959 residues: Probable LRR receptor-like serine/threonine-protein kinase At5g37450 (959 aa).

Residues 1–24 (MKEMMGVVGIILVVSSCCLSLLDA) form the signal peptide. Residues 25 to 565 (QEITHPTDVS…SGMSIGVSVG (541 aa)) are Extracellular-facing. N-linked (GlcNAc...) asparagine glycosylation is found at N62, N88, N102, and N123. LRR repeat units lie at residues 79–100 (VKELRLLNMNLTGQLAPELGLL), 101–124 (SNLTILNFMWNDLTGQIPPELGNL), 125–148 (THLIFLLLSGNQLTGSLPQELGSL), 149–172 (SNLLILQIDYNEISGKLPTSLANL), 173–198 (KKLKHFHMNNNSITGQIPPEYSTLTN), 200–220 (LHFLMDNNKLTGNLPPELAQM), 221–244 (PSLRILQLDGSNFDGTEIPSSYGS), 246–268 (PNLVKLSLRNCNLEGPIPDLSKS), and 269–292 (LVLYYLDISSNKLTGEIPKNKFSA). N-linked (GlcNAc...) asparagine glycosylation occurs at N182. Residues N293, N311, N327, N358, N369, and N510 are each glycosylated (N-linked (GlcNAc...) asparagine). LRR repeat units lie at residues 294–314 (ITTINLYNNLLSGSIPSNFSG), 315–338 (LPRLQRLQVQNNNLSGEIPVIWEN), and 341–366 (LKAEEKLILDLRNNMFSNVSSVLLNP). The chain crosses the membrane as a helical span at residues 566 to 586 (IIIGAIAFFLVLSSLALVFFI). Topologically, residues 587 to 959 (KRSKRKRKTR…SGVIPSIAPR (373 aa)) are cytoplasmic. Positions 631-906 (FSDLSQIGRG…RELENIYGLI (276 aa)) constitute a Protein kinase domain. ATP is bound by residues 637–645 (IGRGGYGKV) and K659. D755 serves as the catalytic Proton acceptor.

The protein belongs to the protein kinase superfamily. Ser/Thr protein kinase family.

The protein localises to the membrane. It carries out the reaction L-seryl-[protein] + ATP = O-phospho-L-seryl-[protein] + ADP + H(+). It catalyses the reaction L-threonyl-[protein] + ATP = O-phospho-L-threonyl-[protein] + ADP + H(+). This chain is Probable LRR receptor-like serine/threonine-protein kinase At5g37450, found in Arabidopsis thaliana (Mouse-ear cress).